A 323-amino-acid chain; its full sequence is GDSL esterase/lipase At5g03980 (323 aa).

The signal sequence occupies residues 1–21 (MSTTKALSLLVFILFVSLVHS). Catalysis depends on serine 36, which acts as the Nucleophile. A glycan (N-linked (GlcNAc...) asparagine) is linked at asparagine 77. Catalysis depends on residues aspartate 294 and histidine 297.

The protein belongs to the 'GDSL' lipolytic enzyme family.

The protein resides in the secreted. In Arabidopsis thaliana (Mouse-ear cress), this protein is GDSL esterase/lipase At5g03980.